Here is a 446-residue protein sequence, read N- to C-terminus: Phosphoglucosamine mutase (446 aa).

The Phosphoserine intermediate role is filled by Ser-103. Mg(2+) contacts are provided by Ser-103, Asp-242, Asp-244, and Asp-246. Residue Ser-103 is modified to Phosphoserine.

It belongs to the phosphohexose mutase family. It depends on Mg(2+) as a cofactor. In terms of processing, activated by phosphorylation.

It catalyses the reaction alpha-D-glucosamine 1-phosphate = D-glucosamine 6-phosphate. Its function is as follows. Catalyzes the conversion of glucosamine-6-phosphate to glucosamine-1-phosphate. The polypeptide is Phosphoglucosamine mutase (Vibrio atlanticus (strain LGP32) (Vibrio splendidus (strain Mel32))).